Here is an 801-residue protein sequence, read N- to C-terminus: Phenylalanine--tRNA ligase beta subunit (801 aa).

The tRNA-binding domain maps to 39–153; the sequence is AEGLSKLVVG…EGAIPGDSIF (115 aa). A B5 domain is found at 406–481; the sequence is TEPVEVSTTL…RIYGYEKLPT (76 aa). The Mg(2+) site is built by Asp459, Asp465, Glu468, and Glu469. In terms of domain architecture, FDX-ACB spans 708 to 801; the sequence is TKYPSVSRDI…LVEKVNAEIR (94 aa).

It belongs to the phenylalanyl-tRNA synthetase beta subunit family. Type 1 subfamily. In terms of assembly, tetramer of two alpha and two beta subunits. Requires Mg(2+) as cofactor.

The protein resides in the cytoplasm. The catalysed reaction is tRNA(Phe) + L-phenylalanine + ATP = L-phenylalanyl-tRNA(Phe) + AMP + diphosphate + H(+). This Streptococcus agalactiae serotype Ia (strain ATCC 27591 / A909 / CDC SS700) protein is Phenylalanine--tRNA ligase beta subunit.